The primary structure comprises 686 residues: Hexamerin 70c (686 aa).

Positions 1–19 (MLSKVVLLVALAAICGAQG) are cleaved as a signal peptide. The region spanning 32-155 (FLHKQKKIFD…IAVLYRPDTK (124 aa)) is the Hemocyanin N-terminal domain. The region spanning 161-431 (AIYEIYPNYF…MLYQNILSYF (271 aa)) is the Hemocyanin middle domain. N-linked (GlcNAc...) asparagine glycans are attached at residues Asn-205 and Asn-662. The Hemocyanin C-terminal domain maps to 440–676 (QYSQSELQMP…NMYFKDVFIY (237 aa)).

The protein belongs to the hemocyanin/hexamerin family. As to quaternary structure, probable homohexamer. In terms of tissue distribution, expressed in the fat body and secreted into the hemolymph (at protein level). Present in trophocytes and oenocytes of the fat body (at protein level). Not expressed in ovary or testis.

The protein localises to the secreted. Its subcellular location is the nucleus. It localises to the cytoplasm. The protein resides in the cytoplasmic granule. Functionally, storage protein that may function as a nutrient supply to compensate for lack of dietary proteins during metamorphosis and egg production. In Apis mellifera (Honeybee), this protein is Hexamerin 70c.